The sequence spans 38 residues: Large ribosomal subunit protein bL36 (38 aa).

It belongs to the bacterial ribosomal protein bL36 family.

This is Large ribosomal subunit protein bL36 from Hahella chejuensis (strain KCTC 2396).